We begin with the raw amino-acid sequence, 599 residues long: Elongation factor 4 (599 aa).

One can recognise a tr-type G domain in the interval 2-184 (KNIRNFSIIA…RLVRDIPPPQ (183 aa)). GTP contacts are provided by residues 14-19 (DHGKST) and 131-134 (NKID).

The protein belongs to the TRAFAC class translation factor GTPase superfamily. Classic translation factor GTPase family. LepA subfamily.

The protein resides in the cell inner membrane. The enzyme catalyses GTP + H2O = GDP + phosphate + H(+). Functionally, required for accurate and efficient protein synthesis under certain stress conditions. May act as a fidelity factor of the translation reaction, by catalyzing a one-codon backward translocation of tRNAs on improperly translocated ribosomes. Back-translocation proceeds from a post-translocation (POST) complex to a pre-translocation (PRE) complex, thus giving elongation factor G a second chance to translocate the tRNAs correctly. Binds to ribosomes in a GTP-dependent manner. In Salmonella gallinarum (strain 287/91 / NCTC 13346), this protein is Elongation factor 4.